A 252-amino-acid polypeptide reads, in one-letter code: Major prion protein (252 aa).

The N-terminal stretch at 1–22 is a signal peptide; the sequence is MANLGYWMLVLFVATWSDLGLC. Residues 23-229 form an interaction with GRB2, ERI3 and SYN1 region; the sequence is KKRPKPGGWN…ESQAYYQRGS (207 aa). The interval 26-104 is disordered; that stretch reads PKPGGWNTGG…HNQWNKPSKP (79 aa). 5 repeat units span residues 51-58, 59-66, 67-74, 75-82, and 83-90. The tract at residues 51–90 is 5 X 8 AA tandem repeats of P-H-G-G-G-W-G-Q; the sequence is PQGGGWGQPHGGGWGQPHGGGWGQPHGGGWGQPHGGGWGQ. The segment covering 52–92 has biased composition (gly residues); it reads QGGGWGQPHGGGWGQPHGGGWGQPHGGGWGQPHGGGWGQAG. The Cu(2+) site is built by His60, Gly61, Gly62, His68, Gly69, Gly70, His76, Gly77, Gly78, His84, Gly85, and Gly86. Cysteines 178 and 213 form a disulfide. Asn180 and Asn196 each carry an N-linked (GlcNAc...) asparagine glycan. A lipid anchor (GPI-anchor amidated serine) is attached at Ser229. Residues 230-252 constitute a propeptide, removed in mature form; the sequence is SMVLFSSPPVILLISFLIFLIVG.

It belongs to the prion family. As to quaternary structure, monomer and homodimer. Has a tendency to aggregate into amyloid fibrils containing a cross-beta spine, formed by a steric zipper of superposed beta-strands. Soluble oligomers may represent an intermediate stage on the path to fibril formation. Copper binding may promote oligomerization. Interacts with GRB2, APP, ERI3/PRNPIP and SYN1. Mislocalized cytosolically exposed PrP interacts with MGRN1; this interaction alters MGRN1 subcellular location and causes lysosomal enlargement. Interacts with KIAA1191.

The protein localises to the cell membrane. It is found in the golgi apparatus. Functionally, its primary physiological function is unclear. Has cytoprotective activity against internal or environmental stresses. May play a role in neuronal development and synaptic plasticity. May be required for neuronal myelin sheath maintenance. May play a role in iron uptake and iron homeostasis. Soluble oligomers are toxic to cultured neuroblastoma cells and induce apoptosis (in vitro). Association with GPC1 (via its heparan sulfate chains) targets PRNP to lipid rafts. Also provides Cu(2+) or Zn(2+) for the ascorbate-mediated GPC1 deaminase degradation of its heparan sulfate side chains. The protein is Major prion protein (PRNP) of Ateles paniscus (Black spider monkey).